The primary structure comprises 112 residues: METLLGLLILWLQLQWVSSKQEVTQIPAALSVPEGENLVLNCSFTDSAIYNLQWFRQDPGKGLTSLLLIQSSQREQTSGRLNASLDKSSGRSTLYIAASQPGDSATYLCAVR.

A signal peptide spans 1–19; that stretch reads METLLGLLILWLQLQWVSS. The region spanning 21–112 is the Ig-like domain; it reads QEVTQIPAAL…DSATYLCAVR (92 aa). 2 N-linked (GlcNAc...) asparagine glycosylation sites follow: asparagine 41 and asparagine 82. An intrachain disulfide couples cysteine 42 to cysteine 109.

In terms of assembly, alpha-beta TR is a heterodimer composed of an alpha and beta chain; disulfide-linked. The alpha-beta TR is associated with the transmembrane signaling CD3 coreceptor proteins to form the TR-CD3 (TcR or TCR). The assembly of alpha-beta TR heterodimers with CD3 occurs in the endoplasmic reticulum where a single alpha-beta TR heterodimer associates with one CD3D-CD3E heterodimer, one CD3G-CD3E heterodimer and one CD247 homodimer forming a stable octameric structure. CD3D-CD3E and CD3G-CD3E heterodimers preferentially associate with TR alpha and TR beta chains, respectively. The association of the CD247 homodimer is the last step of TcR assembly in the endoplasmic reticulum and is required for transport to the cell surface.

The protein localises to the cell membrane. Functionally, v region of the variable domain of T cell receptor (TR) alpha chain that participates in the antigen recognition. Alpha-beta T cell receptors are antigen specific receptors which are essential to the immune response and are present on the cell surface of T lymphocytes. Recognize peptide-major histocompatibility (MH) (pMH) complexes that are displayed by antigen presenting cells (APC), a prerequisite for efficient T cell adaptive immunity against pathogens. Binding of alpha-beta TR to pMH complex initiates TR-CD3 clustering on the cell surface and intracellular activation of LCK that phosphorylates the ITAM motifs of CD3G, CD3D, CD3E and CD247 enabling the recruitment of ZAP70. In turn ZAP70 phosphorylates LAT, which recruits numerous signaling molecules to form the LAT signalosome. The LAT signalosome propagates signal branching to three major signaling pathways, the calcium, the mitogen-activated protein kinase (MAPK) kinase and the nuclear factor NF-kappa-B (NF-kB) pathways, leading to the mobilization of transcription factors that are critical for gene expression and essential for T cell growth and differentiation. The T cell repertoire is generated in the thymus, by V-(D)-J rearrangement. This repertoire is then shaped by intrathymic selection events to generate a peripheral T cell pool of self-MH restricted, non-autoaggressive T cells. Post-thymic interaction of alpha-beta TR with the pMH complexes shapes TR structural and functional avidity. The sequence is that of T cell receptor alpha variable 21 from Homo sapiens (Human).